Here is a 448-residue protein sequence, read N- to C-terminus: tRNA(Ile)-lysidine synthase (448 aa).

25–30 (SGGSDS) contributes to the ATP binding site.

Belongs to the tRNA(Ile)-lysidine synthase family.

The protein resides in the cytoplasm. It catalyses the reaction cytidine(34) in tRNA(Ile2) + L-lysine + ATP = lysidine(34) in tRNA(Ile2) + AMP + diphosphate + H(+). Functionally, ligates lysine onto the cytidine present at position 34 of the AUA codon-specific tRNA(Ile) that contains the anticodon CAU, in an ATP-dependent manner. Cytidine is converted to lysidine, thus changing the amino acid specificity of the tRNA from methionine to isoleucine. This Brucella suis biovar 1 (strain 1330) protein is tRNA(Ile)-lysidine synthase.